Here is a 1005-residue protein sequence, read N- to C-terminus: Translation initiation factor IF-2 (1005 aa).

Disordered regions lie at residues 54-337 (KYVP…RRPQ) and 368-414 (PKPK…PTSV). The span at 58–73 (SPSTHSMPPTRPTSHS) shows a compositional bias: polar residues. The segment covering 75-86 (PLPPQPGKPQPK) has biased composition (pro residues). Positions 146 to 157 (GSNSPSHSESTP) are enriched in polar residues. Composition is skewed to low complexity over residues 189–198 (PSPAAMAGRA) and 222–240 (VESA…PRAE). Residues 258–274 (PRSETSEDGARRGEKLV) are compositionally biased toward basic and acidic residues. The segment covering 392 to 401 (GGRKLSRRDR) has biased composition (basic residues). The 174-residue stretch at 495–668 (RRPPVVTIMG…LLVSEVEDLY (174 aa)) folds into the tr-type G domain. A G1 region spans residues 504 to 511 (GHVDHGKT). 504–511 (GHVDHGKT) contributes to the GTP binding site. The G2 stretch occupies residues 529–533 (GITQH). Residues 554–557 (DTPG) form a G3 region. GTP-binding positions include 554–558 (DTPGH) and 608–611 (NKID). Residues 608–611 (NKID) are G4. A G5 region spans residues 644-646 (SAI).

This sequence belongs to the TRAFAC class translation factor GTPase superfamily. Classic translation factor GTPase family. IF-2 subfamily.

The protein resides in the cytoplasm. Its function is as follows. One of the essential components for the initiation of protein synthesis. Protects formylmethionyl-tRNA from spontaneous hydrolysis and promotes its binding to the 30S ribosomal subunits. Also involved in the hydrolysis of GTP during the formation of the 70S ribosomal complex. In Cyanothece sp. (strain PCC 7425 / ATCC 29141), this protein is Translation initiation factor IF-2.